The following is a 173-amino-acid chain: Photosystem I assembly protein Ycf3 (173 aa).

TPR repeat units lie at residues 35 to 68, 72 to 105, and 120 to 153; these read AYVYYRDGLSAQNAGDYAEALENYEESLKLEESP, SETLKNMAIIYMSNGDEDLALDTYQRALDQNSNQ, and GRTAQEAGLQDEADRLFDRAADVWTQAVRLYPGG.

It belongs to the Ycf3 family.

Its subcellular location is the cellular thylakoid membrane. Its function is as follows. Essential for the assembly of the photosystem I (PSI) complex. May act as a chaperone-like factor to guide the assembly of the PSI subunits. The polypeptide is Photosystem I assembly protein Ycf3 (Prochlorococcus marinus (strain MIT 9313)).